The following is a 390-amino-acid chain: Glutamate 5-kinase (390 aa).

Lysine 29 contacts ATP. Substrate is bound by residues serine 69, aspartate 156, and asparagine 168. Position 188 to 189 (188 to 189 (TD)) interacts with ATP. The PUA domain maps to 295 to 374 (SGSLIVDAGA…EQFDRILGNN (80 aa)).

It belongs to the glutamate 5-kinase family.

It is found in the cytoplasm. The catalysed reaction is L-glutamate + ATP = L-glutamyl 5-phosphate + ADP. It functions in the pathway amino-acid biosynthesis; L-proline biosynthesis; L-glutamate 5-semialdehyde from L-glutamate: step 1/2. Its function is as follows. Catalyzes the transfer of a phosphate group to glutamate to form L-glutamate 5-phosphate. The chain is Glutamate 5-kinase from Psychrobacter cryohalolentis (strain ATCC BAA-1226 / DSM 17306 / VKM B-2378 / K5).